The chain runs to 210 residues: Imidazole glycerol phosphate synthase subunit HisH 1 (210 aa).

The Glutamine amidotransferase type-1 domain occupies 3-210 (KIAIVDYGMC…LDNFLSFSNV (208 aa)). The active-site Nucleophile is the cysteine 82. Residues histidine 189 and glutamate 191 contribute to the active site.

As to quaternary structure, heterodimer of HisH and HisF.

It is found in the cytoplasm. It catalyses the reaction 5-[(5-phospho-1-deoxy-D-ribulos-1-ylimino)methylamino]-1-(5-phospho-beta-D-ribosyl)imidazole-4-carboxamide + L-glutamine = D-erythro-1-(imidazol-4-yl)glycerol 3-phosphate + 5-amino-1-(5-phospho-beta-D-ribosyl)imidazole-4-carboxamide + L-glutamate + H(+). It carries out the reaction L-glutamine + H2O = L-glutamate + NH4(+). Its pathway is amino-acid biosynthesis; L-histidine biosynthesis; L-histidine from 5-phospho-alpha-D-ribose 1-diphosphate: step 5/9. In terms of biological role, IGPS catalyzes the conversion of PRFAR and glutamine to IGP, AICAR and glutamate. The HisH subunit provides the glutamine amidotransferase activity that produces the ammonia necessary to HisF for the synthesis of IGP and AICAR. In Parasynechococcus marenigrum (strain WH8102), this protein is Imidazole glycerol phosphate synthase subunit HisH 1 (hisH1).